The chain runs to 143 residues: Phospholipase A2 isozymes PA3A/PA3B/PA5 (143 aa).

Residues Trp10, Gly12, and Gly14 each coordinate Ca(2+). 3 disulfides stabilise this stretch: Cys11–Cys33, Cys32–Cys72, and Cys39–Cys65. Residue His36 is part of the active site. Ca(2+) is bound at residue Asp37.

Belongs to the phospholipase A2 family. Group III subfamily. Requires Ca(2+) as cofactor. In terms of tissue distribution, expressed by the venom gland.

The protein localises to the secreted. The enzyme catalyses a 1,2-diacyl-sn-glycero-3-phosphocholine + H2O = a 1-acyl-sn-glycero-3-phosphocholine + a fatty acid + H(+). PLA2 catalyzes the calcium-dependent hydrolysis of the 2-acyl groups in 3-sn-phosphoglycerides. The protein is Phospholipase A2 isozymes PA3A/PA3B/PA5 of Heloderma suspectum (Gila monster).